A 308-amino-acid chain; its full sequence is tRNA pseudouridine synthase B (308 aa).

Catalysis depends on D49, which acts as the Nucleophile.

Belongs to the pseudouridine synthase TruB family. Type 1 subfamily.

It carries out the reaction uridine(55) in tRNA = pseudouridine(55) in tRNA. Responsible for synthesis of pseudouridine from uracil-55 in the psi GC loop of transfer RNAs. The polypeptide is tRNA pseudouridine synthase B (Corynebacterium jeikeium (strain K411)).